Here is a 74-residue protein sequence, read N- to C-terminus: Protein SlyX homolog (74 aa).

Positions 52–74 are disordered; that stretch reads LKQMQENQSTDSDPADEPPPPHY.

It belongs to the SlyX family.

This chain is Protein SlyX homolog, found in Idiomarina loihiensis (strain ATCC BAA-735 / DSM 15497 / L2-TR).